The chain runs to 326 residues: GMP reductase (326 aa).

Cys175 functions as the Thioimidate intermediate in the catalytic mechanism. 204 to 227 (IIADGGIRTHGDIAKSVRFGATMV) lines the NADP(+) pocket.

This sequence belongs to the IMPDH/GMPR family. GuaC type 2 subfamily.

The enzyme catalyses IMP + NH4(+) + NADP(+) = GMP + NADPH + 2 H(+). In terms of biological role, catalyzes the irreversible NADPH-dependent deamination of GMP to IMP. It functions in the conversion of nucleobase, nucleoside and nucleotide derivatives of G to A nucleotides, and in maintaining the intracellular balance of A and G nucleotides. The sequence is that of GMP reductase from Bacillus licheniformis (strain ATCC 14580 / DSM 13 / JCM 2505 / CCUG 7422 / NBRC 12200 / NCIMB 9375 / NCTC 10341 / NRRL NRS-1264 / Gibson 46).